The following is a 168-amino-acid chain: Group IIF secretory phospholipase A2 (168 aa).

The N-terminal stretch at 1–20 (MKKFFTVAILAGSVLSTAHG) is a signal peptide. 7 disulfide bridges follow: cysteine 46/cysteine 138, cysteine 48/cysteine 64, cysteine 63/cysteine 120, cysteine 69/cysteine 145, cysteine 70/cysteine 113, cysteine 79/cysteine 106, and cysteine 98/cysteine 111. Ca(2+) contacts are provided by tyrosine 47, glycine 49, and glycine 51. Histidine 67 is a catalytic residue. Aspartate 68 is a Ca(2+) binding site. Residues asparagine 92 and asparagine 102 are each glycosylated (N-linked (GlcNAc...) asparagine). Aspartate 114 is an active-site residue. N-linked (GlcNAc...) asparagine glycans are attached at residues asparagine 123 and asparagine 144. The segment at 139–168 (QGPTPNCSIYEPPPEEVTCSHQSPAPPAPP) is required for localization on the plasma membrane.

This sequence belongs to the phospholipase A2 family. Requires Ca(2+) as cofactor. In terms of tissue distribution, expressed at high levels in placenta, testis, thymus and at lower levels in heart, kidney, liver and prostate. Highly expressed in rheumatoid arthritic tissues, including synovial lining cells in the intima, capillary endothelial cells and plasma cells.

The protein localises to the secreted. Its subcellular location is the cell membrane. The catalysed reaction is a 1,2-diacyl-sn-glycero-3-phosphocholine + H2O = a 1-acyl-sn-glycero-3-phosphocholine + a fatty acid + H(+). It catalyses the reaction 1-hexadecanoyl-2-(9Z-octadecenoyl)-sn-glycero-3-phospho-(1'-sn-glycerol) + H2O = 1-hexadecanoyl-sn-glycero-3-phospho-(1'-sn-glycerol) + (9Z)-octadecenoate + H(+). It carries out the reaction 1-hexadecanoyl-2-(9Z,12Z-octadecadienoyl)-sn-glycero-3-phosphoethanolamine + H2O = 1-hexadecanoyl-sn-glycero-3-phosphoethanolamine + (9Z,12Z)-octadecadienoate + H(+). The enzyme catalyses 1-hexadecanoyl-2-(5Z,8Z,11Z,14Z-eicosatetraenoyl)-sn-glycero-3-phosphoethanolamine + H2O = 1-hexadecanoyl-sn-glycero-3-phosphoethanolamine + (5Z,8Z,11Z,14Z)-eicosatetraenoate + H(+). The catalysed reaction is 1-hexadecanoyl-2-(9Z-octadecenoyl)-sn-glycero-3-phosphocholine + H2O = 1-hexadecanoyl-sn-glycero-3-phosphocholine + (9Z)-octadecenoate + H(+). It catalyses the reaction 1-hexadecanoyl-2-(9Z-octadecenoyl)-sn-glycero-3-phospho-L-serine + H2O = 1-hexadecanoyl-sn-glycero-3-phospho-L-serine + (9Z)-octadecenoate + H(+). Its function is as follows. Secretory calcium-dependent phospholipase A2 that primarily targets extracellular phospholipids. Hydrolyzes the ester bond of the fatty acyl group attached at the sn-2 position of phospholipids (phospholipase A2 activity), the catalytic efficiency decreasing in the following order: phosphatidylglycerols &gt; phosphatidylethanolamines &gt; phosphatidylcholines &gt; phosphatidylserines. May play a role in lipid mediator production in inflammatory conditions, by providing arachidonic acid to downstream cyclooxygenases and lipoxygenases. In Homo sapiens (Human), this protein is Group IIF secretory phospholipase A2 (PLA2G2F).